Here is a 576-residue protein sequence, read N- to C-terminus: M-phase inducer phosphatase 2 (576 aa).

Ser-42 carries the post-translational modification Phosphoserine. Residues Arg-90–Ser-105 are compositionally biased toward low complexity. The interval Arg-90–Pro-119 is disordered. Residue Ser-167 is modified to Phosphoserine; by MELK. Ser-248 carries the phosphoserine modification. Ser-321 is subject to Phosphoserine; by MELK and MAPK14. Positions Gln-338–Gln-358 are disordered. Ser-351 carries the phosphoserine; by AURKA modification. Ser-372 is subject to Phosphoserine; by BRSK1 and MAPK14. Positions Ile-427–Glu-534 constitute a Rhodanese domain. Cys-483 is an active-site residue. Ser-559 bears the Phosphoserine mark.

This sequence belongs to the MPI phosphatase family. Interacts with MAPK14 and 14-3-3 proteins. In terms of processing, phosphorylated by BRSK1 in vitro. Phosphorylated by CHEK1, which inhibits the activity of this protein. Phosphorylation at Ser-351 by AURKA might locally participate in the control of the onset of mitosis. Phosphorylation by MELK at Ser-167 promotes localization to the centrosome and the spindle poles during mitosis. Phosphorylation at Ser-321 and Ser-372 by MAPK14 is required for binding to 14-3-3 proteins. As to expression, expressed predominantly in spleen, lung, heart, brain, intestine, and muscle.

It is found in the cytoplasm. The protein localises to the cytoskeleton. The protein resides in the microtubule organizing center. It localises to the centrosome. Its subcellular location is the spindle pole. It carries out the reaction O-phospho-L-tyrosyl-[protein] + H2O = L-tyrosyl-[protein] + phosphate. With respect to regulation, stimulated by B-type cyclins. Its function is as follows. Tyrosine protein phosphatase which functions as a dosage-dependent inducer of mitotic progression. Directly dephosphorylates CDK1 and stimulates its kinase activity. Required for G2/M phases of the cell cycle progression and abscission during cytokinesis in a ECT2-dependent manner. The three isoforms seem to have a different level of activity. This is M-phase inducer phosphatase 2 (Cdc25b) from Mus musculus (Mouse).